Reading from the N-terminus, the 184-residue chain is Thylakoid membrane protein slr0575 (184 aa).

The next 2 helical transmembrane spans lie at 5 to 25 (ISLA…GFVA) and 31 to 51 (ATLN…GLAL).

Its subcellular location is the cellular thylakoid membrane. The protein is Thylakoid membrane protein slr0575 of Synechocystis sp. (strain ATCC 27184 / PCC 6803 / Kazusa).